The following is a 629-amino-acid chain: tRNA uridine 5-carboxymethylaminomethyl modification enzyme MnmG (629 aa).

FAD contacts are provided by residues 13-18 (GGGHAG), V125, and S180. 273 to 287 (GPRYCPSIEDKVMRF) contributes to the NAD(+) binding site. Residue Q370 participates in FAD binding.

It belongs to the MnmG family. As to quaternary structure, homodimer. Heterotetramer of two MnmE and two MnmG subunits. FAD serves as cofactor.

Its subcellular location is the cytoplasm. NAD-binding protein involved in the addition of a carboxymethylaminomethyl (cmnm) group at the wobble position (U34) of certain tRNAs, forming tRNA-cmnm(5)s(2)U34. The polypeptide is tRNA uridine 5-carboxymethylaminomethyl modification enzyme MnmG (Escherichia coli (strain SMS-3-5 / SECEC)).